The sequence spans 304 residues: Tegument protein VP22 (304 aa).

Disordered stretches follow at residues 23–68 and 112–184; these read YSTV…PNDD and STSN…GTPK. Residues 43–58 are compositionally biased toward basic and acidic residues; it reads RENDLYDKQSVSKEND. Residues 123-142 are compositionally biased toward pro residues; the sequence is AQPPPRGAAAAPPPRVPTRP. Low complexity predominate over residues 143 to 154; it reads PTRAAATSTTPR. The Nuclear localization signal motif lies at 160–163; it reads PKQR. The Nuclear export signal signature appears at 233-245; that stretch reads LDRFLKAAAIRIL. A disordered region spans residues 262–304; the sequence is STPDGYAAAGPNGYDRRPRTASRRRSLKCKPPADDFFDDTNSG. The span at 280–289 shows a compositional bias: basic residues; it reads RTASRRRSLK.

This sequence belongs to the alphaherpesvirinae VP22 tegument protein family. As to quaternary structure, interacts with gE (via C-terminus); this interaction is necessary for the recruitment of VP22 to the Golgi and its packaging into virions. Interacts with gM (via C-terminus). Interacts with VP16; this interaction allows the formation of a tripartite complex composed of VP16, VP22 and UL41/VHS. Interacts with the capsid-binding protein UL16. Interacts with host CGAS. Highly phosphorylated in the host cell. Packaging is selective for underphosphorylated forms.

The protein resides in the virion tegument. The protein localises to the host cytoplasm. Its subcellular location is the host nucleus. It localises to the host Golgi apparatus. Functionally, tegument protein that plays different roles during the time course of infection. Participates in both the accumulation of viral mRNAs and viral protein translation at late time of infection. Modulates the RNase activity of the virion host shutoff protein UL41 probably to ensure necessary levels of key cellular mRNAs and proteins. Plays a role in microtubule reorganization that occurs after viral infection by stabilizing microtubule network. Plays a role in the inhibition of host innate immune system by targeting the CGAS enzymatic activity which is the principal cytosolic DNA sensor that detects invading viral DNA. Acts by mediating disruption of liquid-like droplets in which CGAS is activated, thereby preventing CGAS activity. The sequence is that of Tegument protein VP22 from Equine herpesvirus 1 (strain Ab4p) (EHV-1).